The sequence spans 380 residues: Probable protein phosphatase 2C 34 (380 aa).

The 304-residue stretch at 32-335 (AAGEFSMAAA…DDISVIVVYL (304 aa)) folds into the PPM-type phosphatase domain. Asp66, Gly67, Asp267, and Asp326 together coordinate Mn(2+).

It belongs to the PP2C family. Requires Mg(2+) as cofactor. The cofactor is Mn(2+).

It carries out the reaction O-phospho-L-seryl-[protein] + H2O = L-seryl-[protein] + phosphate. The enzyme catalyses O-phospho-L-threonyl-[protein] + H2O = L-threonyl-[protein] + phosphate. The protein is Probable protein phosphatase 2C 34 (BIPP2C2) of Oryza sativa subsp. indica (Rice).